The following is a 69-amino-acid chain: Protein hunchback (69 aa).

C2H2-type zinc fingers lie at residues Lys-1–His-11, Phe-17–His-39, and Tyr-45–His-69.

This sequence belongs to the hunchback C2H2-type zinc-finger protein family.

It is found in the nucleus. Its function is as follows. Gap class segmentation protein that controls development of head structures. The polypeptide is Protein hunchback (hb) (Apis mellifera (Honeybee)).